We begin with the raw amino-acid sequence, 404 residues long: Cysteine desulfurase IscS (404 aa).

Pyridoxal 5'-phosphate is bound by residues 75-76 (AT), N155, Q183, and 203-205 (SAH). At K206 the chain carries N6-(pyridoxal phosphate)lysine. T243 provides a ligand contact to pyridoxal 5'-phosphate. The active-site Cysteine persulfide intermediate is the C328. C328 provides a ligand contact to [2Fe-2S] cluster.

This sequence belongs to the class-V pyridoxal-phosphate-dependent aminotransferase family. NifS/IscS subfamily. As to quaternary structure, homodimer. Forms a heterotetramer with IscU, interacts with other sulfur acceptors. It depends on pyridoxal 5'-phosphate as a cofactor.

Its subcellular location is the cytoplasm. The catalysed reaction is (sulfur carrier)-H + L-cysteine = (sulfur carrier)-SH + L-alanine. Its pathway is cofactor biosynthesis; iron-sulfur cluster biosynthesis. Its function is as follows. Master enzyme that delivers sulfur to a number of partners involved in Fe-S cluster assembly, tRNA modification or cofactor biosynthesis. Catalyzes the removal of elemental sulfur atoms from cysteine to produce alanine. Functions as a sulfur delivery protein for Fe-S cluster synthesis onto IscU, an Fe-S scaffold assembly protein, as well as other S acceptor proteins. This is Cysteine desulfurase IscS from Pseudomonas fluorescens (strain ATCC BAA-477 / NRRL B-23932 / Pf-5).